Reading from the N-terminus, the 341-residue chain is GTP-binding protein GTR2 (341 aa).

GTP is bound by residues serine 23, serine 24, serine 43, histidine 124, and aspartate 127.

This sequence belongs to the GTR/RAG GTP-binding protein family. In terms of assembly, heterodimer; with GTR1. Component of the GSE complex composed of GTR1, GTR2, SLM4, MEH1 and LTV1. Component of the EGO complex, at least composed of GTR2, SLM4 and MEH1. Interacts with GTR1; the interaction is direct.

It localises to the vacuole membrane. The enzyme catalyses GTP + H2O = GDP + phosphate + H(+). Functionally, GTPase involved in activation of the TORC1 signaling pathway, which promotes growth and represses autophagy in nutrient-rich conditions. Also required for TORC1 inactivation during nitrogen starvation. Required for intracellular sorting of GAP1 out of the endosome. Involved in the regulation of microautophagy. This Saccharomyces cerevisiae (strain ATCC 204508 / S288c) (Baker's yeast) protein is GTP-binding protein GTR2.